The chain runs to 164 residues: Ribonuclease P protein component 2 (164 aa).

The protein belongs to the eukaryotic/archaeal RNase P protein component 2 family. In terms of assembly, consists of a catalytic RNA component and at least 4-5 protein subunits.

It localises to the cytoplasm. The catalysed reaction is Endonucleolytic cleavage of RNA, removing 5'-extranucleotides from tRNA precursor.. Functionally, part of ribonuclease P, a protein complex that generates mature tRNA molecules by cleaving their 5'-ends. The sequence is that of Ribonuclease P protein component 2 from Halobacterium salinarum (strain ATCC 29341 / DSM 671 / R1).